The sequence spans 449 residues: CBL-interacting protein kinase 31 (449 aa).

The Protein kinase domain occupies 20–275; it reads YELGRTIGEG…ISQILEDPWF (256 aa). Residues 26–34 and K49 each bind ATP; that span reads IGEGTFAKV. Residue D143 is the Proton acceptor of the active site. The interval 161–190 is activation loop; the sequence is DFGLSALTEQVKADGLLHTTCGTPNYVAPE. The NAF domain maps to 313–337; it reads DQPTSMNAFELISLNQALNLDNLFE.

The protein belongs to the protein kinase superfamily. CAMK Ser/Thr protein kinase family. SNF1 subfamily. In terms of assembly, may interact with CBL3. Mn(2+) is required as a cofactor. In terms of processing, autophosphorylated. Highly expressed in leaf blade and leaf sheath, but not in other tissues.

It catalyses the reaction L-seryl-[protein] + ATP = O-phospho-L-seryl-[protein] + ADP + H(+). It carries out the reaction L-threonyl-[protein] + ATP = O-phospho-L-threonyl-[protein] + ADP + H(+). Involved in cold stress tolerance. CIPK serine-threonine protein kinases interact with CBL proteins. Binding of a CBL protein to the regulatory NAF domain of CIPK protein lead to the activation of the kinase in a calcium-dependent manner. The sequence is that of CBL-interacting protein kinase 31 (CIPK31) from Oryza sativa subsp. japonica (Rice).